The sequence spans 331 residues: Malate dehydrogenase (331 aa).

An NAD(+)-binding site is contributed by 14-20 (GAAGSIG). 2 residues coordinate substrate: R95 and R101. NAD(+)-binding positions include N108, Q115, and 132-134 (VGN). Positions 134 and 165 each coordinate substrate. The active-site Proton acceptor is the H190.

It belongs to the LDH/MDH superfamily. MDH type 2 family.

The catalysed reaction is (S)-malate + NAD(+) = oxaloacetate + NADH + H(+). Functionally, catalyzes the reversible oxidation of malate to oxaloacetate. This is Malate dehydrogenase from Rhodococcus jostii (strain RHA1).